A 1126-amino-acid polypeptide reads, in one-letter code: Ubiquitin carboxyl-terminal hydrolase 16/45 (1126 aa).

Residues 1–15 (MVKKRQADSRDHDCS) show a composition bias toward basic and acidic residues. Positions 1–44 (MVKKRQADSRDHDCSTDSGNEDLHHRKGLGSPGQSDGATPTTAS) are disordered. Residues 32–44 (PGQSDGATPTTAS) are compositionally biased toward polar residues. Residues 43–181 (ASCQHIKKAV…ELVKKLAQKP (139 aa)) form a UBP-type zinc finger. Zn(2+)-binding residues include cysteine 45, histidine 47, cysteine 70, cysteine 73, cysteine 111, cysteine 114, cysteine 119, histidine 126, histidine 130, histidine 139, cysteine 152, and cysteine 155. Composition is skewed to low complexity over residues 215 to 229 (GGSFDDSSSRGSLAA) and 254 to 264 (SSGLSTSDSLT). Residues 215-264 (GGSFDDSSSRGSLAAAGGGGGVGSSRNRQVAIPMPPPEPSSGLSTSDSLT) are disordered. Cysteine 315 (nucleophile) is an active-site residue. Disordered stretches follow at residues 513 to 547 (KPQPPQRRKPSPELSLTSSSSSVTPSTGQPTINTK), 570 to 762 (ASLG…SGSS), and 795 to 833 (EQGASNGTEDADGEAKAIEQPEKTPSQAQAMAQAQARTK). Positions 524-539 (PELSLTSSSSSVTPST) are enriched in low complexity. Residues 586–598 (QRKAKRAAKKRQK) show a composition bias toward basic residues. 2 stretches are compositionally biased toward low complexity: residues 599–614 (SSLNLNGNDSGNGNEL) and 646–657 (TEDSTTSSVTTS). The span at 674-701 (APSTNNVPSSTASLTAPSKTYMDSNGNA) shows a compositional bias: polar residues. Basic and acidic residues predominate over residues 705–718 (GEKRDDTPEHMDKD). Residues 730 to 762 (ATSPAPTATNSSTSTSATGNNNSVAGSGLSGSS) show a composition bias toward low complexity. Positions 807–816 (GEAKAIEQPE) are enriched in basic and acidic residues. The segment covering 821 to 830 (QAQAMAQAQA) has biased composition (low complexity). The Proton acceptor role is filled by histidine 984. The interval 1037–1089 (LKVLDDSDDFSNSSSNSSTSDESQTPATPLEEQQTQQAQQPQQPQQLEEAANV) is disordered. The span at 1046-1086 (FSNSSSNSSTSDESQTPATPLEEQQTQQAQQPQQPQQLEEA) shows a compositional bias: low complexity.

The protein belongs to the peptidase C19 family.

It catalyses the reaction Thiol-dependent hydrolysis of ester, thioester, amide, peptide and isopeptide bonds formed by the C-terminal Gly of ubiquitin (a 76-residue protein attached to proteins as an intracellular targeting signal).. In terms of biological role, involved in the regulation of DNA damage repair. This Drosophila melanogaster (Fruit fly) protein is Ubiquitin carboxyl-terminal hydrolase 16/45.